The following is a 247-amino-acid chain: UPF0309 protein Teth39_1980 (247 aa).

The region spanning 31-213 (IANSLLKEED…EAEIVFIMIK (183 aa)) is the SIS domain.

The protein belongs to the UPF0309 family.

The polypeptide is UPF0309 protein Teth39_1980 (Thermoanaerobacter pseudethanolicus (strain ATCC 33223 / 39E) (Clostridium thermohydrosulfuricum)).